The sequence spans 502 residues: Maturase K (502 aa).

This sequence belongs to the intron maturase 2 family. MatK subfamily.

Its subcellular location is the plastid. It localises to the chloroplast. Its function is as follows. Usually encoded in the trnK tRNA gene intron. Probably assists in splicing its own and other chloroplast group II introns. In Vaccinium vitis-idaea (Mountain cranberry), this protein is Maturase K.